The sequence spans 456 residues: Bifunctional protein GlmU (456 aa).

The tract at residues 1-229 is pyrophosphorylase; that stretch reads MSNSAMSVVI…LSEVEGVNNR (229 aa). Residues 11 to 14, Lys-25, Gln-76, 81 to 82, 103 to 105, Gly-140, Glu-154, Asn-169, and Asn-227 each bind UDP-N-acetyl-alpha-D-glucosamine; these read LAAG, GT, and YGD. Asp-105 serves as a coordination point for Mg(2+). Asn-227 provides a ligand contact to Mg(2+). The linker stretch occupies residues 230–250; the sequence is LQLARLERVYQAEQAEKLLLA. The segment at 251-456 is N-acetyltransferase; sequence GVMLRDPARF…QGWQRPVKKK (206 aa). UDP-N-acetyl-alpha-D-glucosamine contacts are provided by Arg-333 and Lys-351. Catalysis depends on His-363, which acts as the Proton acceptor. UDP-N-acetyl-alpha-D-glucosamine-binding residues include Tyr-366 and Asn-377. Acetyl-CoA-binding positions include Ala-380, 386–387, Ser-405, Ala-423, and Arg-440; that span reads NY.

This sequence in the N-terminal section; belongs to the N-acetylglucosamine-1-phosphate uridyltransferase family. In the C-terminal section; belongs to the transferase hexapeptide repeat family. Homotrimer. Requires Mg(2+) as cofactor.

Its subcellular location is the cytoplasm. The enzyme catalyses alpha-D-glucosamine 1-phosphate + acetyl-CoA = N-acetyl-alpha-D-glucosamine 1-phosphate + CoA + H(+). It catalyses the reaction N-acetyl-alpha-D-glucosamine 1-phosphate + UTP + H(+) = UDP-N-acetyl-alpha-D-glucosamine + diphosphate. The protein operates within nucleotide-sugar biosynthesis; UDP-N-acetyl-alpha-D-glucosamine biosynthesis; N-acetyl-alpha-D-glucosamine 1-phosphate from alpha-D-glucosamine 6-phosphate (route II): step 2/2. Its pathway is nucleotide-sugar biosynthesis; UDP-N-acetyl-alpha-D-glucosamine biosynthesis; UDP-N-acetyl-alpha-D-glucosamine from N-acetyl-alpha-D-glucosamine 1-phosphate: step 1/1. It participates in bacterial outer membrane biogenesis; LPS lipid A biosynthesis. Functionally, catalyzes the last two sequential reactions in the de novo biosynthetic pathway for UDP-N-acetylglucosamine (UDP-GlcNAc). The C-terminal domain catalyzes the transfer of acetyl group from acetyl coenzyme A to glucosamine-1-phosphate (GlcN-1-P) to produce N-acetylglucosamine-1-phosphate (GlcNAc-1-P), which is converted into UDP-GlcNAc by the transfer of uridine 5-monophosphate (from uridine 5-triphosphate), a reaction catalyzed by the N-terminal domain. The chain is Bifunctional protein GlmU from Klebsiella pneumoniae subsp. pneumoniae (strain ATCC 700721 / MGH 78578).